The following is a 427-amino-acid chain: Peptidase B (427 aa).

Mn(2+)-binding residues include lysine 195 and aspartate 200. The active site involves lysine 207. Aspartate 218, aspartate 277, and glutamate 279 together coordinate Mn(2+). Arginine 281 is an active-site residue.

The protein belongs to the peptidase M17 family. In terms of assembly, homohexamer. Requires Mn(2+) as cofactor.

The protein resides in the cytoplasm. It carries out the reaction Release of an N-terminal amino acid, Xaa, from a peptide or arylamide. Xaa is preferably Glu or Asp but may be other amino acids, including Leu, Met, His, Cys and Gln.. Probably plays an important role in intracellular peptide degradation. This chain is Peptidase B, found in Shigella dysenteriae serotype 1 (strain Sd197).